Reading from the N-terminus, the 283-residue chain is Putative transcription factor kapC (283 aa).

Residues 1 to 10 (MQPTLAPAPH) show a composition bias toward pro residues. Positions 1–121 (MQPTLAPAPH…NRAAQRAFRQ (121 aa)) are disordered. The segment covering 26–42 (HDQLLAAHQHLSHPQQA) has biased composition (low complexity). The span at 55–67 (QPNTTSPRDQNNI) shows a compositional bias: polar residues. Positions 102–165 (PLSTSKRAAQ…EYIINLQSRL (64 aa)) constitute a bZIP domain. Residues 103–126 (LSTSKRAAQNRAAQRAFRQRKESY) are basic motif. A compositionally biased stretch (low complexity) spans 108 to 118 (RAAQNRAAQRA). The segment at 130–161 (LEEQVKEFDNTNETMKQLQAENYQLREYIINL) is leucine-zipper. The interval 178–283 (NIDLNQPRND…EPGHGLPVVS (106 aa)) is disordered.

This sequence belongs to the bZIP family.

The protein resides in the nucleus. Its function is as follows. Putative transcription factor. The polypeptide is Putative transcription factor kapC (kapC) (Aspergillus niger (strain ATCC MYA-4892 / CBS 513.88 / FGSC A1513)).